The sequence spans 87 residues: Small ribosomal subunit protein bS18 (87 aa).

A compositionally biased stretch (basic and acidic residues) spans 1–10; that stretch reads MAGKSSGDRR. Residues 1-23 form a disordered region; it reads MAGKSSGDRRKLLRGAKVGKNAA.

This sequence belongs to the bacterial ribosomal protein bS18 family. In terms of assembly, part of the 30S ribosomal subunit. Forms a tight heterodimer with protein bS6.

Binds as a heterodimer with protein bS6 to the central domain of the 16S rRNA, where it helps stabilize the platform of the 30S subunit. The polypeptide is Small ribosomal subunit protein bS18 (Clavibacter sepedonicus (Clavibacter michiganensis subsp. sepedonicus)).